The primary structure comprises 377 residues: Queuine tRNA-ribosyltransferase (377 aa).

Residue Asp92 is the Proton acceptor of the active site. Substrate contacts are provided by residues 92–96 (DSGGF), Asp146, Gln190, and Gly217. Residues 248–254 (GVGRPED) form an RNA binding region. Residue Asp267 is the Nucleophile of the active site. The interval 272–276 (TRHAR) is RNA binding; important for wobble base 34 recognition. Zn(2+) contacts are provided by Cys305, Cys307, Cys310, and His337.

The protein belongs to the queuine tRNA-ribosyltransferase family. As to quaternary structure, homodimer. Within each dimer, one monomer is responsible for RNA recognition and catalysis, while the other monomer binds to the replacement base PreQ1. Requires Zn(2+) as cofactor.

The enzyme catalyses 7-aminomethyl-7-carbaguanine + guanosine(34) in tRNA = 7-aminomethyl-7-carbaguanosine(34) in tRNA + guanine. It participates in tRNA modification; tRNA-queuosine biosynthesis. Its function is as follows. Catalyzes the base-exchange of a guanine (G) residue with the queuine precursor 7-aminomethyl-7-deazaguanine (PreQ1) at position 34 (anticodon wobble position) in tRNAs with GU(N) anticodons (tRNA-Asp, -Asn, -His and -Tyr). Catalysis occurs through a double-displacement mechanism. The nucleophile active site attacks the C1' of nucleotide 34 to detach the guanine base from the RNA, forming a covalent enzyme-RNA intermediate. The proton acceptor active site deprotonates the incoming PreQ1, allowing a nucleophilic attack on the C1' of the ribose to form the product. After dissociation, two additional enzymatic reactions on the tRNA convert PreQ1 to queuine (Q), resulting in the hypermodified nucleoside queuosine (7-(((4,5-cis-dihydroxy-2-cyclopenten-1-yl)amino)methyl)-7-deazaguanosine). In Xylella fastidiosa (strain Temecula1 / ATCC 700964), this protein is Queuine tRNA-ribosyltransferase.